The primary structure comprises 148 residues: Large ribosomal subunit protein bL9 (148 aa).

Belongs to the bacterial ribosomal protein bL9 family.

Binds to the 23S rRNA. The chain is Large ribosomal subunit protein bL9 from Caldicellulosiruptor bescii (strain ATCC BAA-1888 / DSM 6725 / KCTC 15123 / Z-1320) (Anaerocellum thermophilum).